The following is a 190-amino-acid chain: Adenylate kinase (190 aa).

10–15 (AAGKGT) is an ATP binding site. Residues 30–59 (STGDMLRAAIASGSELGQRVSGIMERGELV) are NMP. Residues threonine 31, arginine 36, 57 to 59 (ELV), 85 to 88 (GFPR), and glutamine 92 contribute to the AMP site. The interval 126-136 (GRFAESGRADD) is LID. Residue arginine 127 participates in ATP binding. AMP contacts are provided by arginine 133 and arginine 144. Residue glycine 172 coordinates ATP.

This sequence belongs to the adenylate kinase family. In terms of assembly, monomer.

Its subcellular location is the cytoplasm. The catalysed reaction is AMP + ATP = 2 ADP. Its pathway is purine metabolism; AMP biosynthesis via salvage pathway; AMP from ADP: step 1/1. Its function is as follows. Catalyzes the reversible transfer of the terminal phosphate group between ATP and AMP. Plays an important role in cellular energy homeostasis and in adenine nucleotide metabolism. This chain is Adenylate kinase, found in Phenylobacterium zucineum (strain HLK1).